A 503-amino-acid chain; its full sequence is MSTTLGQESKTDWASLDSDEEVQRISDKVNQLNTSENKNEDQKATNLSDRLGPKITENVDAKSEQDKATNTIAEDANTKQSENDESNLIPNKNEVRVKLADLQADPNSPLFSVKSFEELELKPELLKGIYSMKFQKPSKIQEKALPLLLSNPPRNMIGQSQSGTGKTAAFALTMLSRVDASVPKPQAICLAPSRELARQIMDVVTEMGKYTEVKTAFGIKDSVPKGAKIDAQIVIGTPGTVMDLMKRRQLDARDIKVFVLDEADNMLDQQGLGDQSMRIKHLLPRNTQIVLFSATFSERVEKYAERFAPNANEIRLKTEELSVEGIKQLYMDCQSEEHKYNVLVELYGLLTIGQSIIFCKKKDTAEEIARRMTADGHTVACLTGNLEGAQRDAIMDSFRVGTSKVLVTTNVIARGIDVSQVNLVVNYDMPLDQAGRPDPQTYLHRIGRTGRFGRVGVSINFVHDKKSWEEMNAIQEYFQRPITRVPTDDYEELEKVVKNALKM.

A disordered region spans residues 1-69; it reads MSTTLGQESK…DAKSEQDKAT (69 aa). Over residues 57–67 the composition is skewed to basic and acidic residues; that stretch reads ENVDAKSEQDK. A Q motif motif is present at residues 114–142; it reads KSFEELELKPELLKGIYSMKFQKPSKIQE. In terms of domain architecture, Helicase ATP-binding spans 147 to 314; it reads LLLSNPPRNM…ERFAPNANEI (168 aa). 160 to 167 contacts ATP; it reads SQSGTGKT. Residues 261–264 carry the DEAD box motif; sequence DEAD. Residues 325–493 enclose the Helicase C-terminal domain; that stretch reads GIKQLYMDCQ…RVPTDDYEEL (169 aa).

This sequence belongs to the DEAD box helicase family. DDX19/DBP5 subfamily. In terms of assembly, associates with the nuclear pore complex.

The protein resides in the cytoplasm. The protein localises to the nucleus. It is found in the nuclear pore complex. Its subcellular location is the nucleus membrane. The enzyme catalyses ATP + H2O = ADP + phosphate + H(+). Its function is as follows. ATP-dependent RNA helicase associated with the nuclear pore complex and essential for mRNA export from the nucleus. May participate in a terminal step of mRNA export through the removal of proteins that accompany mRNA through the nucleopore complex. May also be involved in early transcription. The chain is ATP-dependent RNA helicase dbp5 (dbp5) from Schizosaccharomyces pombe (strain 972 / ATCC 24843) (Fission yeast).